Here is a 292-residue protein sequence, read N- to C-terminus: Probable endonuclease 4 (292 aa).

Positions 70, 111, 146, 180, 183, 215, 228, 230, and 260 each coordinate Zn(2+).

It belongs to the AP endonuclease 2 family. Requires Zn(2+) as cofactor.

The enzyme catalyses Endonucleolytic cleavage to 5'-phosphooligonucleotide end-products.. Its function is as follows. Endonuclease IV plays a role in DNA repair. It cleaves phosphodiester bonds at apurinic or apyrimidinic (AP) sites, generating a 3'-hydroxyl group and a 5'-terminal sugar phosphate. The chain is Probable endonuclease 4 from Shouchella clausii (strain KSM-K16) (Alkalihalobacillus clausii).